A 421-amino-acid polypeptide reads, in one-letter code: MSRQMWLDTSALLEAISEYVVRCNGDTFSGLTTGDFNALSNMFTQLSVSSAGYVSDPRVPLQTMSNMFVSFITSTDRCGYMLRKTWFNSDTKPTVSDDFITTYIRPRLQVPMSDTVRQLNNLSLQPSAKPKLYERQNAIMKGLDIPYSEPIEPCKLFRSVAGQTGNIPMMGILATPPAAQQQPFFVAERRRILFGIRSNAAIPAGAYQFVVPAWASVLSVTGAYVYFTNSFFGTTIAGVTATATAADAATTFTVPTDANNLPVQTDSRLSFSLGGGNINLELGVAKTGFCVAIEGEFTILANRSQAYYTLNSITQTPTSIDDFDVSDFLTTFLSQLRACGQYEIFSDAMDQLTNSLITNYMDPPALPAGLAFTSPWFRFSERARTILALQNVDLNIRKLIVRHLWVITSLIAVFGRYYRPN.

This sequence belongs to the phytoreovirus outer capsid protein P8 family. Homotrimer. Homomultimer. Interacts with host peroxisomal glycolate oxidase (GOX). This interaction mediates its relocation to virus factories peripheral to host peroxisomes.

Its subcellular location is the virion. The protein localises to the host cytoplasm. Functionally, capsid protein which self-assembles to form the outer icosahedral capsid with a T=13 symmetry, about 70 nm in diameter and consisting of 780 molecules capsid proteins. The polypeptide is Outer capsid protein P8 (Alopecurus aequalis (Barnyard grass)).